We begin with the raw amino-acid sequence, 201 residues long: Potassium-transporting ATPase KdpC subunit (201 aa).

The helical transmembrane segment at 12–34 (LLALTMITGLAYPLAVTGLATVL) threads the bilayer. The disordered stretch occupies residues 69–102 (RPSATVAPDPADSSKTVSAPYNAANSGGSNLGPT). Positions 81–101 (SSKTVSAPYNAANSGGSNLGP) are enriched in polar residues.

It belongs to the KdpC family. As to quaternary structure, the system is composed of three essential subunits: KdpA, KdpB and KdpC.

It is found in the cell inner membrane. Part of the high-affinity ATP-driven potassium transport (or Kdp) system, which catalyzes the hydrolysis of ATP coupled with the electrogenic transport of potassium into the cytoplasm. This subunit acts as a catalytic chaperone that increases the ATP-binding affinity of the ATP-hydrolyzing subunit KdpB by the formation of a transient KdpB/KdpC/ATP ternary complex. This chain is Potassium-transporting ATPase KdpC subunit, found in Rhodopseudomonas palustris (strain TIE-1).